Here is a 765-residue protein sequence, read N- to C-terminus: Glucosamine inositolphosphorylceramide transferase 1 (765 aa).

Helical transmembrane passes span 43–63 (FFAS…WFVF), 394–414 (VILG…LGFL), and 476–496 (MGKF…CVGV). Substrate is bound by residues N553, 577–582 (NSLNNR), 598–600 (DDD), R628, and 683–687 (FNCED). Residue D600 coordinates Mn(2+). C685 and C738 are joined by a disulfide. The active site involves D687.

This sequence belongs to the glycosyltransferase 64 family. Mn(2+) serves as cofactor. Specifically and highly expressed in developing embryos and mature seeds. Also detected at low levels in stigma and pollen.

The protein localises to the membrane. The enzyme catalyses an N-(2R-hydroxy-very-long-chain fatty acyl)-(R)-4-hydroxysphingoid base + a 1,2-diacyl-sn-glycero-3-phospho-(1D-myo-inositol) = a 1D-myo-inositol-1-phospho-N-[(R)-2-hydroxy-very-long-chain fatty acyl]-(R)-4-hydroxysphingoid base + a 1,2-diacyl-sn-glycerol. It functions in the pathway sphingolipid metabolism. Its function is as follows. Glycosyltransferase that mediates the glycosylation of glycosylinositol phosphorylceramides (GIPCs), the major sphingolipids in the plasma membrane; acts as a HexN(Ac)-specific GIPC sugar transferase and accepts glucosamine (GlcN) and N-acetylglucosamine (GlcNAc) as the sugar unit. Responsible for the glycosylation of a subgroup of GIPCs found in seeds and pollen that contain GlcNAc and GlcN (GlcN(Ac)). Maybe involved in the maintenance of cell-cell adhesion. The chain is Glucosamine inositolphosphorylceramide transferase 1 from Arabidopsis thaliana (Mouse-ear cress).